The chain runs to 125 residues: Profilin-P (125 aa).

The residue at position 2 (S2) is an N-acetylserine.

The protein belongs to the profilin family. As to quaternary structure, occurs in many kinds of cells as a complex with monomeric actin in a 1:1 ratio.

The protein resides in the cytoplasm. It is found in the cytoskeleton. In terms of biological role, binds to actin and affects the structure of the cytoskeleton. At high concentrations, profilin prevents the polymerization of actin, whereas it enhances it at low concentrations. By binding to PIP2, it inhibits the formation of IP3 and DG. This chain is Profilin-P (PROP), found in Physarum polycephalum (Slime mold).